The chain runs to 822 residues: Valine--tRNA ligase (822 aa).

Positions 41–51 (PNVTGQLHLGH) match the 'HIGH' region motif. The short motif at 511–515 (KMSKS) is the 'KMSKS' region element. Lys-514 serves as a coordination point for ATP. A coiled-coil region spans residues 765-822 (EQKGRELKEIQFLKSEILRAEKILTNKGFLEKAPREKIDLERTKLEKLKEKLVFYEKK).

This sequence belongs to the class-I aminoacyl-tRNA synthetase family. ValS type 1 subfamily. As to quaternary structure, monomer.

Its subcellular location is the cytoplasm. The catalysed reaction is tRNA(Val) + L-valine + ATP = L-valyl-tRNA(Val) + AMP + diphosphate. Its function is as follows. Catalyzes the attachment of valine to tRNA(Val). As ValRS can inadvertently accommodate and process structurally similar amino acids such as threonine, to avoid such errors, it has a 'posttransfer' editing activity that hydrolyzes mischarged Thr-tRNA(Val) in a tRNA-dependent manner. The sequence is that of Valine--tRNA ligase from Mesomycoplasma hyopneumoniae (strain J / ATCC 25934 / NCTC 10110) (Mycoplasma hyopneumoniae).